An 83-amino-acid polypeptide reads, in one-letter code: Cobrotoxin (83 aa).

A signal peptide spans 1-21; sequence MKTLLLTLLVVTIVCLDLGYT. 4 cysteine pairs are disulfide-bonded: C24/C45, C38/C62, C64/C75, and C76/C81.

It belongs to the three-finger toxin family. Short-chain subfamily. Type I alpha-neurotoxin sub-subfamily. In terms of tissue distribution, expressed by the venom gland.

It localises to the secreted. Its function is as follows. Binds to muscle nicotinic acetylcholine receptor (nAChR) and inhibit acetylcholine from binding to the receptor, thereby impairing neuromuscular transmission. Has a higher toxicity than cobrotoxin-b. In vivo, when tested on rat arthritis models, shows anti-inflammation and immunosuppression effects. The chain is Cobrotoxin from Naja atra (Chinese cobra).